We begin with the raw amino-acid sequence, 631 residues long: Phosphomethylpyrimidine synthase (631 aa).

Residues N239, M268, Y297, H333, 353–355 (SRG), 394–397 (DGLR), and E433 contribute to the substrate site. H437 lines the Zn(2+) pocket. Y460 contributes to the substrate binding site. H501 contacts Zn(2+). [4Fe-4S] cluster-binding residues include C581, C584, and C589.

It belongs to the ThiC family. In terms of assembly, homodimer. [4Fe-4S] cluster serves as cofactor.

It carries out the reaction 5-amino-1-(5-phospho-beta-D-ribosyl)imidazole + S-adenosyl-L-methionine = 4-amino-2-methyl-5-(phosphooxymethyl)pyrimidine + CO + 5'-deoxyadenosine + formate + L-methionine + 3 H(+). It functions in the pathway cofactor biosynthesis; thiamine diphosphate biosynthesis. Its function is as follows. Catalyzes the synthesis of the hydroxymethylpyrimidine phosphate (HMP-P) moiety of thiamine from aminoimidazole ribotide (AIR) in a radical S-adenosyl-L-methionine (SAM)-dependent reaction. This chain is Phosphomethylpyrimidine synthase, found in Shigella dysenteriae serotype 1 (strain Sd197).